Here is a 122-residue protein sequence, read N- to C-terminus: uncharacterized protein (122 aa).

The protein resides in the plastid. This is an uncharacterized protein from Euglena longa (Euglenophycean alga).